The chain runs to 75 residues: DNA-directed RNA polymerase subunit omega (75 aa).

It belongs to the RNA polymerase subunit omega family. In cyanobacteria the RNAP catalytic core is composed of 2 alpha, 1 beta, 1 beta', 1 gamma and 1 omega subunit. When a sigma factor is associated with the core the holoenzyme is formed, which can initiate transcription.

It carries out the reaction RNA(n) + a ribonucleoside 5'-triphosphate = RNA(n+1) + diphosphate. In terms of biological role, promotes RNA polymerase assembly. Latches the N- and C-terminal regions of the beta' subunit thereby facilitating its interaction with the beta and alpha subunits. The chain is DNA-directed RNA polymerase subunit omega from Synechococcus sp. (strain CC9605).